The sequence spans 168 residues: HTH-type transcriptional regulator IscR (168 aa).

An HTH rrf2-type domain is found at 2-131 (KLTSKGRYAV…NNITLGELMT (130 aa)). The H-T-H motif DNA-binding region spans 28–51 (LADISERQGISLSYLEQLFSKLRK). The [2Fe-2S] cluster site is built by C92, C98, and C104.

[2Fe-2S] cluster is required as a cofactor.

Functionally, regulates the transcription of several operons and genes involved in the biogenesis of Fe-S clusters and Fe-S-containing proteins. The chain is HTH-type transcriptional regulator IscR from Vibrio parahaemolyticus serotype O3:K6 (strain RIMD 2210633).